The chain runs to 550 residues: MSFSLASTLPAWQAVQTHYESVGKHLVLKELFAKDSSRFEKFSFTFNGLKEEDGPILFDFSKNLITEETVELLVKLAKEANVEGLRDALFAGEHINFTEDRAVFHPALRNVSEKPMKVNGQDVMPGVRKVLRHMKEFSDAVRSGAWKGYTGKPIKSIVNVGIGGSDLGPVMVTEALKPYGQENLELHFVSNIDGTHLAEALKKCDPETTLFLIASKTFTTAETCTNAKSAKDWFLASAKDPSHVAKHFVALSTNEKEVTAFGISAQNMFEFSDWVGGRYSVWSAIGLSVALYIGYENFEAFLSGAHAMDEYFCSTPLEKNIPALAALISIWYSDFFGAQTHLVAPYDQYLHRFPAYLQQLSMESNGKAITRSGDMVNYTTGKILWGEPGTNSQHSFFQLIHQGTKLIPADFLIPIESHNPIDNNKHHRMLFSNFAAQTEALMLGKTPAEVKAEGTPDEIVPHKTFVGNRPSNSIIAKKITPASLGALIAFYEWVTFTEGAVWNINSFDQFGVELGKKLAKNVLAQLETKGDVENHDSSTNGLINLFKNGF.

D-glucose 6-phosphate-binding positions include 164-165 (GS), 215-220 (SKTFTT), Q359, E363, and H394. E363 serves as the catalytic Proton donor. The active site involves H394. A Phosphothreonine modification is found at T455. Position 516 (K516) interacts with D-glucose 6-phosphate. Residue K516 is part of the active site.

Belongs to the GPI family. Homodimer.

Its subcellular location is the cytoplasm. It localises to the cytosol. It carries out the reaction alpha-D-glucose 6-phosphate = beta-D-fructose 6-phosphate. It functions in the pathway carbohydrate degradation; glycolysis; D-glyceraldehyde 3-phosphate and glycerone phosphate from D-glucose: step 2/4. Its function is as follows. In the cytoplasm, catalyzes the conversion of glucose-6-phosphate to fructose-6-phosphate, the second step in glycolysis, and the reverse reaction during gluconeogenesis. The sequence is that of Glucose-6-phosphate isomerase (pgi1) from Schizosaccharomyces pombe (strain 972 / ATCC 24843) (Fission yeast).